The following is a 297-amino-acid chain: Large ribosomal subunit protein uL18 (297 aa).

The residue at position 2 (G2) is an N-acetylglycine. N6-acetyllysine occurs at positions 5 and 48. S185 carries the phosphoserine modification. K220 is subject to N6-acetyllysine; alternate. A Glycyl lysine isopeptide (Lys-Gly) (interchain with G-Cter in SUMO1); alternate cross-link involves residue K220. K220 participates in a covalent cross-link: Glycyl lysine isopeptide (Lys-Gly) (interchain with G-Cter in SUMO2); alternate. Residue T232 is modified to Phosphothreonine. Residues Y253–S297 form a disordered region. The span at K258–R268 shows a compositional bias: basic residues. At S272 the chain carries Phosphoserine.

It belongs to the universal ribosomal protein uL18 family. In terms of assembly, component of the large ribosomal subunit (LSU). Part of the 5S RNP complex, which is a LSU subcomplex composed of the 5S RNA, RPL5 and RPL11. Component of a hexameric 5S RNP precursor complex, composed of 5S RNA, RRS1, RPF2/BXDC1, RPL5, RPL11 and HEATR3; this complex acts as a precursor for ribosome assembly. Interacts with NVL in an ATP-dependent manner. Interacts with RRP1B. Interacts with IPO5, IPO7 and KPNB1; these interactions may be involved in RPL5 nuclear import for the assembly of ribosomal subunits.

It is found in the cytoplasm. The protein localises to the nucleus. Its subcellular location is the nucleolus. Component of the ribosome, a large ribonucleoprotein complex responsible for the synthesis of proteins in the cell. The small ribosomal subunit (SSU) binds messenger RNAs (mRNAs) and translates the encoded message by selecting cognate aminoacyl-transfer RNA (tRNA) molecules. The large subunit (LSU) contains the ribosomal catalytic site termed the peptidyl transferase center (PTC), which catalyzes the formation of peptide bonds, thereby polymerizing the amino acids delivered by tRNAs into a polypeptide chain. The nascent polypeptides leave the ribosome through a tunnel in the LSU and interact with protein factors that function in enzymatic processing, targeting, and the membrane insertion of nascent chains at the exit of the ribosomal tunnel. As part of the 5S RNP/5S ribonucleoprotein particle it is an essential component of the LSU, required for its formation and the maturation of rRNAs. It also couples ribosome biogenesis to p53/TP53 activation. As part of the 5S RNP it accumulates in the nucleoplasm and inhibits MDM2, when ribosome biogenesis is perturbed, mediating the stabilization and the activation of TP53. In Mus musculus (Mouse), this protein is Large ribosomal subunit protein uL18 (Rpl5).